The following is a 262-amino-acid chain: Flap endonuclease Xni (262 aa).

D105 serves as a coordination point for Mg(2+). A 5'-3' exonuclease domain is found at 162–259 (ERSQFLDLMA…VIDSQPEKTI (98 aa)). 5 residues coordinate K(+): L172, A173, P181, I183, and I186. Residues 185 to 190 (GIGPKS) are interaction with DNA.

The protein belongs to the Xni family. The cofactor is Mg(2+). It depends on K(+) as a cofactor.

Its function is as follows. Has flap endonuclease activity. During DNA replication, flap endonucleases cleave the 5'-overhanging flap structure that is generated by displacement synthesis when DNA polymerase encounters the 5'-end of a downstream Okazaki fragment. The sequence is that of Flap endonuclease Xni from Shewanella baltica (strain OS185).